The primary structure comprises 192 residues: Small ribosomal subunit protein bS16 (192 aa).

The disordered stretch occupies residues 153–192 (AEAKAKAEAEAAAAAEEAAETEETPVEAAAEEAPAAESAE). Low complexity predominate over residues 178–192 (VEAAAEEAPAAESAE).

This sequence belongs to the bacterial ribosomal protein bS16 family.

In Porphyromonas gingivalis (strain ATCC BAA-308 / W83), this protein is Small ribosomal subunit protein bS16.